A 176-amino-acid chain; its full sequence is Peptide deformylase (176 aa).

Positions 97 and 139 each coordinate Fe cation. The active site involves glutamate 140. Histidine 143 contacts Fe cation.

It belongs to the polypeptide deformylase family. The cofactor is Fe(2+).

The catalysed reaction is N-terminal N-formyl-L-methionyl-[peptide] + H2O = N-terminal L-methionyl-[peptide] + formate. Its function is as follows. Removes the formyl group from the N-terminal Met of newly synthesized proteins. Requires at least a dipeptide for an efficient rate of reaction. N-terminal L-methionine is a prerequisite for activity but the enzyme has broad specificity at other positions. The polypeptide is Peptide deformylase (Thermomicrobium roseum (strain ATCC 27502 / DSM 5159 / P-2)).